The sequence spans 351 residues: Photosystem II D2 protein (351 aa).

Residues 39–59 (CAYMAIGGWLTGTTFATSWYT) form a helical membrane-spanning segment. His-116 serves as a coordination point for chlorophyll a. The helical transmembrane segment at 123-139 (GFMLRQFEIARLVGVRP) threads the bilayer. Pheophytin a is bound by residues Gln-128 and Asn-141. Residues 151–164 (LFVSVFLIYPLGQS) traverse the membrane as a helical segment. Residue His-196 participates in chlorophyll a binding. The helical transmembrane segment at 206 to 226 (GALLCAIHGATVENTLFEDGD) threads the bilayer. 2 residues coordinate a plastoquinone: His-213 and Phe-260. His-213 serves as a coordination point for Fe cation. His-267 provides a ligand contact to Fe cation. The helical transmembrane segment at 277 to 293 (GLWMSAIGVVGLALNLR) threads the bilayer.

The protein belongs to the reaction center PufL/M/PsbA/D family. In terms of assembly, PSII is composed of 1 copy each of membrane proteins PsbA, PsbB, PsbC, PsbD, PsbE, PsbF, PsbH, PsbI, PsbJ, PsbK, PsbL, PsbM, PsbT, PsbX, PsbY, PsbZ, Psb30/Ycf12, peripheral proteins PsbO, CyanoQ (PsbQ), PsbU, PsbV and a large number of cofactors. It forms dimeric complexes. Requires The D1/D2 heterodimer binds P680, chlorophylls that are the primary electron donor of PSII, and subsequent electron acceptors. It shares a non-heme iron and each subunit binds pheophytin, quinone, additional chlorophylls, carotenoids and lipids. There is also a Cl(-1) ion associated with D1 and D2, which is required for oxygen evolution. The PSII complex binds additional chlorophylls, carotenoids and specific lipids. as cofactor.

It localises to the cellular thylakoid membrane. It carries out the reaction 2 a plastoquinone + 4 hnu + 2 H2O = 2 a plastoquinol + O2. Photosystem II (PSII) is a light-driven water:plastoquinone oxidoreductase that uses light energy to abstract electrons from H(2)O, generating O(2) and a proton gradient subsequently used for ATP formation. It consists of a core antenna complex that captures photons, and an electron transfer chain that converts photonic excitation into a charge separation. The D1/D2 (PsbA/PsbD) reaction center heterodimer binds P680, the primary electron donor of PSII as well as several subsequent electron acceptors. D2 is needed for assembly of a stable PSII complex. This chain is Photosystem II D2 protein, found in Prochlorothrix hollandica.